The sequence spans 210 residues: T-cell surface glycoprotein CD8 beta chain (210 aa).

The signal sequence occupies residues 1–21 (MQPGLWLLLATQLAALRGSSV). The Ig-like V-type domain maps to 22 to 132 (LQQAPGSVMV…ELTFGKGTRL (111 aa)). Residues 22–170 (LQQAPGSVMV…VTQKGPSCGL (149 aa)) lie on the Extracellular side of the membrane. Cysteine 41 and cysteine 116 are oxidised to a cystine. The N-linked (GlcNAc...) asparagine glycan is linked to asparagine 102. The segment at 139-161 (PTNSQPTKKPTPRKKMCRPPSPV) is disordered. Residues 171-191 (LTLGLLVAGVLVLLVSLGVAI) form a helical membrane-spanning segment. The Cytoplasmic portion of the chain corresponds to 192–210 (HLYRLKRRARLRLLKQFYK).

Forms disulfide-linked heterodimers with CD8A at the cell surface. Interacts with CD3D; this interaction couples TCR-CD3 with CD8. Interacts with LCK. Phosphorylated as a consequence of T-cell activation. In terms of processing, palmitoylated at the cytoplasmic tail and thereby targets the heterodimer CD8A/CD8B to lipid rafts unlike CD8A homodimers.

It localises to the cell membrane. Integral membrane glycoprotein that plays an essential role in the immune response and serves multiple functions in responses against both external and internal offenses. In T-cells, functions primarily as a coreceptor for MHC class I molecule:peptide complex. The antigens presented by class I peptides are derived from cytosolic proteins while class II derived from extracellular proteins. Interacts simultaneously with the T-cell receptor (TCR) and the MHC class I proteins presented by antigen presenting cells (APCs). In turn, recruits the Src kinase LCK to the vicinity of the TCR-CD3 complex. A palmitoylation site in the cytoplasmic tail of CD8B chain contributes to partitioning of CD8 into the plasma membrane lipid rafts where signaling proteins are enriched. Once LCK recruited, it initiates different intracellular signaling pathways by phosphorylating various substrates ultimately leading to lymphokine production, motility, adhesion and activation of cytotoxic T-lymphocytes (CTLs). Additionally, plays a critical role in thymic selection of CD8+ T-cells. The polypeptide is T-cell surface glycoprotein CD8 beta chain (CD8B) (Felis catus (Cat)).